Here is a 149-residue protein sequence, read N- to C-terminus: Large ribosomal subunit protein uL13 (149 aa).

It belongs to the universal ribosomal protein uL13 family. Part of the 50S ribosomal subunit.

In terms of biological role, this protein is one of the early assembly proteins of the 50S ribosomal subunit, although it is not seen to bind rRNA by itself. It is important during the early stages of 50S assembly. The chain is Large ribosomal subunit protein uL13 from Borrelia turicatae (strain 91E135).